We begin with the raw amino-acid sequence, 432 residues long: MQVSVETTQGLGRRVTITIAADSIETAVKSELVNVAKKVRIDGFRKGKVPMNVVAQRYGASVRQDVLGELMSRNFIDAIIKEKINPAGAPNYVPGEYKQGEDFTYSVEFEVYPEVELKGLETIEVEKPVVEVTDADVDGMLDTLRKQQANWKDKDGAVDAEDRVTIDFSGSVDGEEFEGGKASDFVLAMGQGRMIPGFEEGIKGHKAGEEFTIDVTFPEEYHAENLKGKAAKFVINLKKVEERELPELTEEFIKRFGVEDGSVAGLRAEVRKNMERELNGAVRNRVKSQAIDGLVKANEIDVPAALIDSEIDVLRRQAAQRFGGNQQQALELPRELFEEQAKRRVVVGLLLGEVIRTHELKADDERVKGLIEEMASAYEDPSEVVQFYGSNKELMDNMRNVALEEQAVEAVLAKAKVSEKATSFNELMNQQA.

The 86-residue stretch at 161 to 246 (EDRVTIDFSG…LKKVEERELP (86 aa)) folds into the PPIase FKBP-type domain.

This sequence belongs to the FKBP-type PPIase family. Tig subfamily.

The protein resides in the cytoplasm. It carries out the reaction [protein]-peptidylproline (omega=180) = [protein]-peptidylproline (omega=0). In terms of biological role, involved in protein export. Acts as a chaperone by maintaining the newly synthesized protein in an open conformation. Functions as a peptidyl-prolyl cis-trans isomerase. The protein is Trigger factor of Enterobacter sp. (strain 638).